Reading from the N-terminus, the 269-residue chain is RBPJ-interacting and tubulin-associated protein 1 (269 aa).

Residues 5 to 17 (VELAVSGMQTLGL) carry the Nuclear export signal motif. Disordered regions lie at residues 66–105 (VGKE…PISH) and 141–269 (LWTP…PPWK). Residues 80–92 (CETTPSRGSTPTL) show a composition bias toward polar residues. The short motif at 92 to 108 (LTPRKKNKYRPISHTPS) is the Nuclear localization signal element. An interaction with RBPJ/RBPSUH region spans residues 128 to 156 (RMAKGDAAKLRALLWTPPPTPRGSHSPRP). An interaction with tubulin region spans residues 156-269 (PREAPLRAIH…ATQKPKPPWK (114 aa)). Over residues 200 to 253 (HSLTHLNVPSTGHPATSAPHTNGPQDLRPSTSGVTFRSPLVTSRARSVSISVPS) the composition is skewed to polar residues.

This sequence belongs to the RITA family. Interacts with RBPJ/RBPSUH.

The protein resides in the cytoplasm. It is found in the nucleus. Its subcellular location is the cytoskeleton. The protein localises to the microtubule organizing center. It localises to the centrosome. Tubulin-binding protein that acts as a negative regulator of Notch signaling pathway. Shuttles between the cytoplasm and the nucleus and mediates the nuclear export of RBPJ/RBPSUH, thereby preventing the interaction between RBPJ/RBPSUH and NICD product of Notch proteins (Notch intracellular domain), leading to down-regulate Notch-mediated transcription. May play a role in neurogenesis. The protein is RBPJ-interacting and tubulin-associated protein 1 (RITA1) of Homo sapiens (Human).